The chain runs to 201 residues: MIGRLYGKIIEKQPPEMVIDVQGIGYEVLLPMTSFYHLPQVGEEATIFTHLVVREDAHLLFGFAQKQDRTLFRELIKTNGVGPKLALAILSAMSVVQFANAVENEELVKLTKIPGVGRKTAERLLVELKGKFKGIAQTDFFVEHSHETMVATYEIDASEEARDALLALGYKLTDAEKMIKKVHKSGATSEQLIRDALKASL.

Positions 1–64 are domain I; sequence MIGRLYGKII…EDAHLLFGFA (64 aa). Residues 65 to 143 are domain II; sequence QKQDRTLFRE…GIAQTDFFVE (79 aa). The tract at residues 144–154 is flexible linker; it reads HSHETMVATYE. Residues 154-201 form a domain III region; the sequence is EIDASEEARDALLALGYKLTDAEKMIKKVHKSGATSEQLIRDALKASL.

Belongs to the RuvA family. In terms of assembly, homotetramer. Forms an RuvA(8)-RuvB(12)-Holliday junction (HJ) complex. HJ DNA is sandwiched between 2 RuvA tetramers; dsDNA enters through RuvA and exits via RuvB. An RuvB hexamer assembles on each DNA strand where it exits the tetramer. Each RuvB hexamer is contacted by two RuvA subunits (via domain III) on 2 adjacent RuvB subunits; this complex drives branch migration. In the full resolvosome a probable DNA-RuvA(4)-RuvB(12)-RuvC(2) complex forms which resolves the HJ.

Its subcellular location is the cytoplasm. Its function is as follows. The RuvA-RuvB-RuvC complex processes Holliday junction (HJ) DNA during genetic recombination and DNA repair, while the RuvA-RuvB complex plays an important role in the rescue of blocked DNA replication forks via replication fork reversal (RFR). RuvA specifically binds to HJ cruciform DNA, conferring on it an open structure. The RuvB hexamer acts as an ATP-dependent pump, pulling dsDNA into and through the RuvAB complex. HJ branch migration allows RuvC to scan DNA until it finds its consensus sequence, where it cleaves and resolves the cruciform DNA. The protein is Holliday junction branch migration complex subunit RuvA of Haemophilus ducreyi (strain 35000HP / ATCC 700724).